A 234-amino-acid chain; its full sequence is Triosephosphate isomerase (234 aa).

Residue 8 to 10 (NFK) coordinates substrate. His-90 acts as the Electrophile in catalysis. Glu-159 serves as the catalytic Proton acceptor. Residues Gly-165 and Ser-197 each contribute to the substrate site.

This sequence belongs to the triosephosphate isomerase family. Homodimer.

The protein resides in the cytoplasm. It catalyses the reaction D-glyceraldehyde 3-phosphate = dihydroxyacetone phosphate. It functions in the pathway carbohydrate biosynthesis; gluconeogenesis. Its pathway is carbohydrate degradation; glycolysis; D-glyceraldehyde 3-phosphate from glycerone phosphate: step 1/1. In terms of biological role, involved in the gluconeogenesis. Catalyzes stereospecifically the conversion of dihydroxyacetone phosphate (DHAP) to D-glyceraldehyde-3-phosphate (G3P). The chain is Triosephosphate isomerase from Helicobacter pylori (strain G27).